The sequence spans 2554 residues: DnaJ homolog subfamily C GRV2 (2554 aa).

Disordered stretches follow at residues 746-766 (DVVD…KRLL) and 810-833 (QRRA…GVDS). Over residues 815 to 825 (DSSSEASNPQA) the composition is skewed to polar residues. 2 coiled-coil regions span residues 925 to 951 (TRQE…EDIS) and 1518 to 1546 (RTAS…LKRQ). The region spanning 1524–1606 (LNEEISNISK…AQCILYRRYG (83 aa)) is the J domain. 2 disordered regions span residues 1960 to 1994 (IEDR…SSEG) and 2339 to 2366 (SGEV…GQTP). The segment covering 1966 to 1977 (SNDTPELQSSVA) has biased composition (polar residues). A compositionally biased stretch (basic and acidic residues) spans 1982-1994 (IEEHSDHQPSSEG). Residues 2352 to 2366 (VNESTDPSSLPGQTP) are compositionally biased toward polar residues.

As to expression, constitutively expressed in roots, hypocotyls, leaves (e.g. vascular tissues), stems, flowers (e.g. petals and stigmas), siliques and pollen.

The protein localises to the endosome membrane. Required for endosome formation, vacuolar protein sorting and determination of the embryo growth axis. Necessary for the transport of proteins into protein storage vacuoles (PSVs). Participates in vesicle trafficking from the endosome to the central vacuole. Involved in the regulation of shoot phototropism and gravitropism, probably through the positioning of specialized amyloplasts (statoliths) in endodermal cells. The sequence is that of DnaJ homolog subfamily C GRV2 (GRV2) from Arabidopsis thaliana (Mouse-ear cress).